The primary structure comprises 425 residues: Histidine--tRNA ligase (425 aa).

This sequence belongs to the class-II aminoacyl-tRNA synthetase family. Homodimer.

The protein resides in the cytoplasm. It catalyses the reaction tRNA(His) + L-histidine + ATP = L-histidyl-tRNA(His) + AMP + diphosphate + H(+). The chain is Histidine--tRNA ligase from Histophilus somni (strain 2336) (Haemophilus somnus).